A 261-amino-acid chain; its full sequence is MRKNNMQTSKDSELKEQAKGKSSKLIHKLPKQRTRISQGQMHSTQDFVNNEDQDAYSVRENENELHINNSGMSELNKKLQLPNVELSTLSHTQEQEFNELNKLIRKINELQEFYLLEDLAKPVTNAGADADDTIVKDLKKELENEKKANHSLKNELLKTREQIKNYSKINILIKELFGLEVADCIEDEDGYRFNCKNTGRRGTLEYQLLLDDQNFTFTPRLNVQTDEELMKHLPDYLLEEIIFTKEQGKLFSARLMKALQD.

The disordered stretch occupies residues Met-1 to His-42. Residues Lys-10–Lys-19 show a composition bias toward basic and acidic residues. Positions Lys-21 to Thr-34 are enriched in basic residues. Residues His-91–Asn-170 are a coiled coil.

Component of a monopolin-like complex composed of pcs1 and mde4. The complex associates with the kinetochore.

Its subcellular location is the nucleus. The protein localises to the nucleolus. It localises to the chromosome. The protein resides in the centromere. In terms of biological role, the monopolin-like pcs1/mde4 complex is essential for accurate chromosome segregation during mitosis and meiosis II. May clamp together microtubule binding sites on the same kinetochore, preventing merotelic attachment of microtubules. In contrast to its S.cerevisiae ortholog CSM1, is not required ofr mono-orientation during meiosis I. The chain is Monopolin complex subunit pcs1 (pcs1) from Schizosaccharomyces pombe (strain 972 / ATCC 24843) (Fission yeast).